A 407-amino-acid polypeptide reads, in one-letter code: Chorismate synthase (407 aa).

The NADP(+) site is built by Arg40 and Arg46. FMN is bound by residues 138–140 (RAS) and 259–260 (QA). Over residues 275–284 (RRGSRAHDEM) the composition is skewed to basic and acidic residues. The disordered stretch occupies residues 275–308 (RRGSRAHDEMYPGTDGVVRSTNRAGGLEGGMTNG). FMN is bound by residues Gly303, 318–322 (KPIST), and Arg344.

The protein belongs to the chorismate synthase family. In terms of assembly, homotetramer. The cofactor is FMNH2.

The catalysed reaction is 5-O-(1-carboxyvinyl)-3-phosphoshikimate = chorismate + phosphate. It participates in metabolic intermediate biosynthesis; chorismate biosynthesis; chorismate from D-erythrose 4-phosphate and phosphoenolpyruvate: step 7/7. In terms of biological role, catalyzes the anti-1,4-elimination of the C-3 phosphate and the C-6 proR hydrogen from 5-enolpyruvylshikimate-3-phosphate (EPSP) to yield chorismate, which is the branch point compound that serves as the starting substrate for the three terminal pathways of aromatic amino acid biosynthesis. This reaction introduces a second double bond into the aromatic ring system. The chain is Chorismate synthase from Mycobacterium ulcerans (strain Agy99).